The chain runs to 387 residues: Formate-dependent phosphoribosylglycinamide formyltransferase (387 aa).

Residues 12–13 (EL) and glutamate 72 each bind N(1)-(5-phospho-beta-D-ribosyl)glycinamide. ATP is bound by residues arginine 104, lysine 145, 150–155 (SSGKGQ), 185–188 (EEFI), and glutamate 193. The 192-residue stretch at 109-300 (DLAAKDLKLL…EFELHLRAIL (192 aa)) folds into the ATP-grasp domain. The Mg(2+) site is built by glutamate 258 and glutamate 270. Residues aspartate 277, lysine 348, and 355–356 (RR) contribute to the N(1)-(5-phospho-beta-D-ribosyl)glycinamide site.

It belongs to the PurK/PurT family. As to quaternary structure, homodimer.

It carries out the reaction N(1)-(5-phospho-beta-D-ribosyl)glycinamide + formate + ATP = N(2)-formyl-N(1)-(5-phospho-beta-D-ribosyl)glycinamide + ADP + phosphate + H(+). Its pathway is purine metabolism; IMP biosynthesis via de novo pathway; N(2)-formyl-N(1)-(5-phospho-D-ribosyl)glycinamide from N(1)-(5-phospho-D-ribosyl)glycinamide (formate route): step 1/1. Its function is as follows. Involved in the de novo purine biosynthesis. Catalyzes the transfer of formate to 5-phospho-ribosyl-glycinamide (GAR), producing 5-phospho-ribosyl-N-formylglycinamide (FGAR). Formate is provided by PurU via hydrolysis of 10-formyl-tetrahydrofolate. This is Formate-dependent phosphoribosylglycinamide formyltransferase from Leptospira interrogans serogroup Icterohaemorrhagiae serovar copenhageni (strain Fiocruz L1-130).